The primary structure comprises 118 residues: Large ribosomal subunit protein uL22 (118 aa).

Belongs to the universal ribosomal protein uL22 family. As to quaternary structure, part of the 50S ribosomal subunit.

This protein binds specifically to 23S rRNA; its binding is stimulated by other ribosomal proteins, e.g. L4, L17, and L20. It is important during the early stages of 50S assembly. It makes multiple contacts with different domains of the 23S rRNA in the assembled 50S subunit and ribosome. Its function is as follows. The globular domain of the protein is located near the polypeptide exit tunnel on the outside of the subunit, while an extended beta-hairpin is found that lines the wall of the exit tunnel in the center of the 70S ribosome. The polypeptide is Large ribosomal subunit protein uL22 (Leuconostoc mesenteroides subsp. mesenteroides (strain ATCC 8293 / DSM 20343 / BCRC 11652 / CCM 1803 / JCM 6124 / NCDO 523 / NBRC 100496 / NCIMB 8023 / NCTC 12954 / NRRL B-1118 / 37Y)).